We begin with the raw amino-acid sequence, 144 residues long: Large ribosomal subunit protein uL11 (144 aa).

The protein belongs to the universal ribosomal protein uL11 family. In terms of assembly, part of the ribosomal stalk of the 50S ribosomal subunit. Interacts with L10 and the large rRNA to form the base of the stalk. L10 forms an elongated spine to which L12 dimers bind in a sequential fashion forming a multimeric L10(L12)X complex. One or more lysine residues are methylated.

Its function is as follows. Forms part of the ribosomal stalk which helps the ribosome interact with GTP-bound translation factors. This is Large ribosomal subunit protein uL11 from Parafrankia sp. (strain EAN1pec).